The chain runs to 56 residues: Large ribosomal subunit protein bL32 (56 aa).

Residues 1-37 form a disordered region; sequence MAVQQNKPTRSKRGMRRSHDALTAPLLSVDKTSGETH.

This sequence belongs to the bacterial ribosomal protein bL32 family.

The polypeptide is Large ribosomal subunit protein bL32 (Photorhabdus laumondii subsp. laumondii (strain DSM 15139 / CIP 105565 / TT01) (Photorhabdus luminescens subsp. laumondii)).